The sequence spans 437 residues: Histidine--tRNA ligase (437 aa).

It belongs to the class-II aminoacyl-tRNA synthetase family. In terms of assembly, homodimer.

The protein localises to the cytoplasm. It carries out the reaction tRNA(His) + L-histidine + ATP = L-histidyl-tRNA(His) + AMP + diphosphate + H(+). The polypeptide is Histidine--tRNA ligase (Leptospira biflexa serovar Patoc (strain Patoc 1 / Ames)).